The chain runs to 327 residues: Undecaprenyl-phosphate 4-deoxy-4-formamido-L-arabinose transferase (327 aa).

Helical transmembrane passes span 233–253 (ILSL…LLLI) and 268–288 (VFTL…GMGL).

The protein belongs to the glycosyltransferase 2 family.

It localises to the cell inner membrane. It carries out the reaction UDP-4-deoxy-4-formamido-beta-L-arabinose + di-trans,octa-cis-undecaprenyl phosphate = 4-deoxy-4-formamido-alpha-L-arabinopyranosyl di-trans,octa-cis-undecaprenyl phosphate + UDP. It participates in glycolipid biosynthesis; 4-amino-4-deoxy-alpha-L-arabinose undecaprenyl phosphate biosynthesis; 4-amino-4-deoxy-alpha-L-arabinose undecaprenyl phosphate from UDP-4-deoxy-4-formamido-beta-L-arabinose and undecaprenyl phosphate: step 1/2. It functions in the pathway bacterial outer membrane biogenesis; lipopolysaccharide biosynthesis. Its function is as follows. Catalyzes the transfer of 4-deoxy-4-formamido-L-arabinose from UDP to undecaprenyl phosphate. The modified arabinose is attached to lipid A and is required for resistance to polymyxin and cationic antimicrobial peptides. The sequence is that of Undecaprenyl-phosphate 4-deoxy-4-formamido-L-arabinose transferase from Pectobacterium atrosepticum (strain SCRI 1043 / ATCC BAA-672) (Erwinia carotovora subsp. atroseptica).